A 1006-amino-acid polypeptide reads, in one-letter code: SAC3 family protein A (1006 aa).

7 disordered regions span residues 1–75, 106–162, 183–239, 266–326, 516–550, 595–638, and 650–690; these read MNHG…GPAT, TPYQ…PGSY, GYQS…TIAT, GTEK…AVST, TVTT…RWEP, GFKP…SDKD, and AGSA…GNLH. 2 stretches are compositionally biased toward polar residues: residues 26–75 and 106–115; these read GSQT…GPAT and TPYQTSSDPH. Over residues 116–140 the composition is skewed to low complexity; that stretch reads NYSNTGYSNYYSGYQQQPSQSYPQP. The span at 144–162 shows a compositional bias: polar residues; it reads YQNTGAPQPLSSFQNPGSY. Polar residues-rich tracts occupy residues 269 to 282 and 313 to 326; these read KLST…SQSF and SHPP…AVST. Over residues 516–539 the composition is skewed to low complexity; it reads TVTTTNVTNSESSSAQLSSLQNKS. A compositionally biased stretch (basic residues) spans 609–618; sequence SFQRPVKRQR. Positions 653-680 are enriched in basic and acidic residues; it reads AEEKKRRDSRSKRFEKIQGHSRGNDLTK. The 175-residue stretch at 804–978 folds into the PCI domain; the sequence is DLPEYNQCLS…DMLLDTKATS (175 aa).

The protein belongs to the SAC3 family. Interacts with EER5, SAC3B and CML20.

It is found in the nucleus. Functionally, component of the TREX-2 complex (transcription and export complex 2), a muliprotein complex that functions in docking export-competent ribonucleoprotein particles (mRNPs) to the nuclear entrance of the nuclear pore complex (nuclear basket). TREX-2 participates in mRNA export and accurate chromatin positioning in the nucleus by tethering genes to the nuclear periphery. The sequence is that of SAC3 family protein A from Arabidopsis thaliana (Mouse-ear cress).